Reading from the N-terminus, the 485-residue chain is 1-aminocyclopropane-1-carboxylate synthase 2 (485 aa).

Positions 55 and 92 each coordinate substrate. Lys-278 carries the post-translational modification N6-(pyridoxal phosphate)lysine. Ser-460 is modified (phosphoserine).

This sequence belongs to the class-I pyridoxal-phosphate-dependent aminotransferase family. In terms of assembly, homodimer and heterodimer. In vivo, the relevance of heterodimerization with other ACS enzymes is however unsure. It depends on pyridoxal 5'-phosphate as a cofactor. Post-translationally, phosphorylated on Ser 460; phosphorylation may regulate its turnover. In terms of processing, may be processed at its C-terminus.

It carries out the reaction S-adenosyl-L-methionine = 1-aminocyclopropane-1-carboxylate + S-methyl-5'-thioadenosine + H(+). It functions in the pathway alkene biosynthesis; ethylene biosynthesis via S-adenosyl-L-methionine; ethylene from S-adenosyl-L-methionine: step 1/2. Functionally, 1-aminocyclopropane-1-carboxylate synthase (ACS) enzymes catalyze the conversion of S-adenosyl-L-methionine (SAM) into 1-aminocyclopropane-1-carboxylate (ACC), a direct precursor of ethylene. The polypeptide is 1-aminocyclopropane-1-carboxylate synthase 2 (ACS2) (Solanum lycopersicum (Tomato)).